The chain runs to 1029 residues: Cilia- and flagella-associated protein 91 (1029 aa).

2 disordered regions span residues 72-97 (NYRP…GPNR) and 117-170 (PPSQ…PWEP). Positions 272-299 (LELLDNALQVREEELDDENRLRVEARKE) form a coiled coil. Residues 837–854 (ENQDQQEPQPQPQPSSSS) show a composition bias toward low complexity. 2 disordered regions span residues 837–861 (ENQD…DLAD) and 876–1029 (GEPS…EAAE). The span at 890–910 (QQLEADAEAEAEAEAEAEAGA) shows a compositional bias: acidic residues. Low complexity predominate over residues 911 to 921 (EAEASAQAGAE). A compositionally biased stretch (acidic residues) spans 922 to 932 (AEAEAGVEAEA). The segment covering 933–944 (EASAGAEASVGA) has biased composition (low complexity). A compositionally biased stretch (acidic residues) spans 964–982 (PEAEAEAEAGAEAEAENGA). Over residues 984–999 (AEARLGGEEEGFREGE) the composition is skewed to basic and acidic residues. Residues 1000–1015 (GQGGAAAGEAGPGGEL) are compositionally biased toward gly residues. Residues 1016–1029 (AEGEGEAGEGEAAE) are compositionally biased toward acidic residues.

The protein belongs to the CFAP91 family. Identified in a spoke-associated complex containing CFAP61, CFAP91 and CFAP251; the complex is associated with the radial spokes of the axoneme. The complex associates with Calmodulin; the association is calcium sensitive. Interacts with RSP3.

Its subcellular location is the cytoplasm. The protein localises to the cytoskeleton. It localises to the flagellum axoneme. As component of a spoke-associated complex, regulates flagellar dynein activity by mediating regulatory signals between the radial spokes and dynein arms. In Chlamydomonas reinhardtii (Chlamydomonas smithii), this protein is Cilia- and flagella-associated protein 91.